The following is a 216-amino-acid chain: Protein-L-isoaspartate O-methyltransferase (216 aa).

Residue Ser-64 is part of the active site.

Belongs to the methyltransferase superfamily. L-isoaspartyl/D-aspartyl protein methyltransferase family.

The protein resides in the cytoplasm. The enzyme catalyses [protein]-L-isoaspartate + S-adenosyl-L-methionine = [protein]-L-isoaspartate alpha-methyl ester + S-adenosyl-L-homocysteine. In terms of biological role, catalyzes the methyl esterification of L-isoaspartyl residues in peptides and proteins that result from spontaneous decomposition of normal L-aspartyl and L-asparaginyl residues. It plays a role in the repair and/or degradation of damaged proteins. The polypeptide is Protein-L-isoaspartate O-methyltransferase (Paracoccus denitrificans (strain Pd 1222)).